We begin with the raw amino-acid sequence, 218 residues long: MTTIIDYGIGNLRSIEKAFETVGATVHRTDDPAAIAEAERLVLPGVGAFRACIDEIRRRDLEGPIHDAIGRGVPFLGVCVGMQLLFETGYEKGEHEGLGVLPGHVAHFRETDAGMPDELTVPHMGWNAIEPTRDHPLLDELGATPYVYFVHSYHPVAEDADDVLTTTSYGHTFPSVVQRDNVFGVQFHPEKSQAAGLGLLDNFAALPTTEEAGRTVST.

The Glutamine amidotransferase type-1 domain occupies 1-213 (MTTIIDYGIG…AALPTTEEAG (213 aa)). Cys-79 (nucleophile) is an active-site residue. Catalysis depends on residues His-188 and Glu-190.

Heterodimer of HisH and HisF.

The protein resides in the cytoplasm. It catalyses the reaction 5-[(5-phospho-1-deoxy-D-ribulos-1-ylimino)methylamino]-1-(5-phospho-beta-D-ribosyl)imidazole-4-carboxamide + L-glutamine = D-erythro-1-(imidazol-4-yl)glycerol 3-phosphate + 5-amino-1-(5-phospho-beta-D-ribosyl)imidazole-4-carboxamide + L-glutamate + H(+). It carries out the reaction L-glutamine + H2O = L-glutamate + NH4(+). The protein operates within amino-acid biosynthesis; L-histidine biosynthesis; L-histidine from 5-phospho-alpha-D-ribose 1-diphosphate: step 5/9. Its function is as follows. IGPS catalyzes the conversion of PRFAR and glutamine to IGP, AICAR and glutamate. The HisH subunit catalyzes the hydrolysis of glutamine to glutamate and ammonia as part of the synthesis of IGP and AICAR. The resulting ammonia molecule is channeled to the active site of HisF. This chain is Imidazole glycerol phosphate synthase subunit HisH, found in Salinibacter ruber (strain DSM 13855 / M31).